The chain runs to 188 residues: dCTP deaminase (188 aa).

Residues 111–116, 135–137, Q156, Y170, and Q180 each bind dCTP; these read KSTYAR and TLE. The active-site Proton donor/acceptor is E137.

This sequence belongs to the dCTP deaminase family. Homotrimer.

The catalysed reaction is dCTP + H2O + H(+) = dUTP + NH4(+). It participates in pyrimidine metabolism; dUMP biosynthesis; dUMP from dCTP (dUTP route): step 1/2. In terms of biological role, catalyzes the deamination of dCTP to dUTP. The chain is dCTP deaminase from Marinobacter nauticus (strain ATCC 700491 / DSM 11845 / VT8) (Marinobacter aquaeolei).